Consider the following 192-residue polypeptide: Orotate phosphoribosyltransferase 2 (192 aa).

5-phospho-alpha-D-ribose 1-diphosphate is bound at residue 116 to 124 (EDIVTTGLS). 2 residues coordinate orotate: T120 and R148.

It belongs to the purine/pyrimidine phosphoribosyltransferase family. PyrE subfamily. As to quaternary structure, homodimer. Mg(2+) serves as cofactor.

It catalyses the reaction orotidine 5'-phosphate + diphosphate = orotate + 5-phospho-alpha-D-ribose 1-diphosphate. It participates in pyrimidine metabolism; UMP biosynthesis via de novo pathway; UMP from orotate: step 1/2. Catalyzes the transfer of a ribosyl phosphate group from 5-phosphoribose 1-diphosphate to orotate, leading to the formation of orotidine monophosphate (OMP). This is Orotate phosphoribosyltransferase 2 from Mesorhizobium japonicum (strain LMG 29417 / CECT 9101 / MAFF 303099) (Mesorhizobium loti (strain MAFF 303099)).